Reading from the N-terminus, the 555-residue chain is Sulfite reductase [ferredoxin] (555 aa).

Residues 1–22 (MTTARPAKARNEGQWALGHREP) form a disordered region. The segment at residues 69–161 (YTQREQGYDG…DVGLQTTEAC (93 aa)) is a cross-link (3'-(S-cysteinyl)-tyrosine (Tyr-Cys)). [4Fe-4S] cluster-binding residues include Cys-417, Cys-423, Cys-463, and Cys-467. Position 467 (Cys-467) interacts with siroheme.

The protein belongs to the nitrite and sulfite reductase 4Fe-4S domain family. In terms of assembly, monomer. It depends on siroheme as a cofactor. Requires [4Fe-4S] cluster as cofactor.

The enzyme catalyses hydrogen sulfide + 6 oxidized [2Fe-2S]-[ferredoxin] + 3 H2O = sulfite + 6 reduced [2Fe-2S]-[ferredoxin] + 7 H(+). Functionally, catalyzes the reduction of sulfite to sulfide, a step in the biosynthesis of sulfur-containing amino acids and cofactors. This Mycobacterium bovis (strain ATCC BAA-935 / AF2122/97) protein is Sulfite reductase [ferredoxin] (sir).